A 478-amino-acid polypeptide reads, in one-letter code: Centromere DNA-binding protein complex CBF3 subunit C (478 aa).

A disordered region spans residues 206–251 (EVGEEKDVDVSGANSDENSSPSSTIKNKKRSASKRSHSDNGNVGAT). Positions 217 to 230 (GANSDENSSPSSTI) are enriched in polar residues. Over residues 231–240 (KNKKRSASKR) the composition is skewed to basic residues.

As to quaternary structure, component of the CBF3 copmplex, which is formed of CBF3A/CBF2, CBF3B/CEP3, CBF3C/CTF13 and CBF3D. CBF3C interacts with CBF3D and SGT1.

It localises to the nucleus. It is found in the chromosome. Its subcellular location is the centromere. Acts as a central component of the centromere DNA-binding protein complex CBF3, which is essential for chromosome segregation and movement of centromeres along microtubules. CBF3 is required for the recruitment of other kinetochore complexes to CEN DNA. It plays a role in the attachment of chromosomes to the spindle and binds selectively to a highly conserved DNA sequence called CDEIII, found in centromers and in several promoters. The association of CBF3C with CBF3D and SGT1 is required for CBF3C activation and CBF3 assembly. In Saccharomyces cerevisiae (strain ATCC 204508 / S288c) (Baker's yeast), this protein is Centromere DNA-binding protein complex CBF3 subunit C (CTF13).